The primary structure comprises 302 residues: N-acetylmuramic acid 6-phosphate etherase (302 aa).

Residues 58 to 221 (IGESFLNGGR…STGAMVKTGK (164 aa)) enclose the SIS domain. Catalysis depends on Glu86, which acts as the Proton donor. Glu117 is a catalytic residue.

It belongs to the GCKR-like family. MurNAc-6-P etherase subfamily. In terms of assembly, homodimer.

It catalyses the reaction N-acetyl-D-muramate 6-phosphate + H2O = N-acetyl-D-glucosamine 6-phosphate + (R)-lactate. It participates in amino-sugar metabolism; N-acetylmuramate degradation. Functionally, specifically catalyzes the cleavage of the D-lactyl ether substituent of MurNAc 6-phosphate, producing GlcNAc 6-phosphate and D-lactate. This is N-acetylmuramic acid 6-phosphate etherase from Clostridium botulinum (strain Langeland / NCTC 10281 / Type F).